Consider the following 528-residue polypeptide: GMP synthase [glutamine-hydrolyzing] (528 aa).

The Glutamine amidotransferase type-1 domain occupies 13 to 204 (AIVILDFGSQ…VYDICSCEPD (192 aa)). Cysteine 90 serves as the catalytic Nucleophile. Catalysis depends on residues histidine 178 and glutamate 180. The 199-residue stretch at 205 to 403 (WTTNLFIDEA…LGLPDEIVRR (199 aa)) folds into the GMPS ATP-PPase domain. An ATP-binding site is contributed by 232–238 (SGGVDSS).

Homodimer.

The catalysed reaction is XMP + L-glutamine + ATP + H2O = GMP + L-glutamate + AMP + diphosphate + 2 H(+). Its pathway is purine metabolism; GMP biosynthesis; GMP from XMP (L-Gln route): step 1/1. In terms of biological role, catalyzes the synthesis of GMP from XMP. This Prochlorococcus marinus (strain NATL1A) protein is GMP synthase [glutamine-hydrolyzing].